A 271-amino-acid chain; its full sequence is Formamidopyrimidine-DNA glycosylase (271 aa).

P2 (schiff-base intermediate with DNA) is an active-site residue. Residue E3 is the Proton donor of the active site. K58 acts as the Proton donor; for beta-elimination activity in catalysis. DNA-binding residues include H92, R111, and R152. The segment at F237 to R271 adopts an FPG-type zinc-finger fold. The active-site Proton donor; for delta-elimination activity is the R261.

It belongs to the FPG family. Monomer. Requires Zn(2+) as cofactor.

It carries out the reaction Hydrolysis of DNA containing ring-opened 7-methylguanine residues, releasing 2,6-diamino-4-hydroxy-5-(N-methyl)formamidopyrimidine.. The enzyme catalyses 2'-deoxyribonucleotide-(2'-deoxyribose 5'-phosphate)-2'-deoxyribonucleotide-DNA = a 3'-end 2'-deoxyribonucleotide-(2,3-dehydro-2,3-deoxyribose 5'-phosphate)-DNA + a 5'-end 5'-phospho-2'-deoxyribonucleoside-DNA + H(+). Its function is as follows. Involved in base excision repair of DNA damaged by oxidation or by mutagenic agents. Acts as a DNA glycosylase that recognizes and removes damaged bases. Has a preference for oxidized purines, such as 7,8-dihydro-8-oxoguanine (8-oxoG). Has AP (apurinic/apyrimidinic) lyase activity and introduces nicks in the DNA strand. Cleaves the DNA backbone by beta-delta elimination to generate a single-strand break at the site of the removed base with both 3'- and 5'-phosphates. This chain is Formamidopyrimidine-DNA glycosylase, found in Xanthomonas axonopodis pv. citri (strain 306).